A 352-amino-acid polypeptide reads, in one-letter code: Secreted RxLR effector protein 122 (352 aa).

The first 21 residues, 1–21, serve as a signal peptide directing secretion; it reads MRGAYYVLIALLVVASSQTSA. The short motif at 48-65 is the RxLR-dEER element; it reads QFLRGSRNVPGDLAHEER. Over residues 280–290 the composition is skewed to low complexity; sequence RGGTTGASRGT. The tract at residues 280–352 is disordered; the sequence is RGGTTGASRG…VEPEGHRSKP (73 aa). Residues 302 to 315 show a composition bias toward polar residues; it reads AASTSKGKSSVFTE.

It belongs to the RxLR effector family.

The protein localises to the secreted. It localises to the host nucleus. In terms of biological role, secreted effector that acts as an elicitor that induces cell death in host plant cells. The polypeptide is Secreted RxLR effector protein 122 (Plasmopara viticola (Downy mildew of grapevine)).